Reading from the N-terminus, the 89-residue chain is Small ribosomal subunit protein uS15 (89 aa).

This sequence belongs to the universal ribosomal protein uS15 family. As to quaternary structure, part of the 30S ribosomal subunit. Forms a bridge to the 50S subunit in the 70S ribosome, contacting the 23S rRNA.

In terms of biological role, one of the primary rRNA binding proteins, it binds directly to 16S rRNA where it helps nucleate assembly of the platform of the 30S subunit by binding and bridging several RNA helices of the 16S rRNA. Functionally, forms an intersubunit bridge (bridge B4) with the 23S rRNA of the 50S subunit in the ribosome. The sequence is that of Small ribosomal subunit protein uS15 from Yersinia pseudotuberculosis serotype O:1b (strain IP 31758).